A 189-amino-acid polypeptide reads, in one-letter code: WASH complex subunit homolog 3 (189 aa).

Positions 35–74 form a coiled coil; it reads MTEMLNNFGNKMEDILEKAEQSLDTADRKLRLMESKLAGM. Disordered stretches follow at residues 76-101 and 150-189; these read LEDK…NPSS and SEGV…SDSD. Residues 150–165 show a composition bias toward basic and acidic residues; sequence SEGVDPSILKRGDEPS. The span at 167-189 shows a compositional bias: polar residues; the sequence is PQAQTSRNYESSGESTASFSDSD. Thr-182 carries the post-translational modification Phosphothreonine.

Belongs to the CCDC53 family. In terms of assembly, probable component of the WASH complex. Component of the DHIC (ddl-1-containing hsf-1 inhibitory complex), which contains at least ddl-1, ddl-2, hsb-1 and hsf-1. Within the complex, interacts with ddl-2. Within the complex, interacts with hsb-1. Within the complex, interacts with hsf-1. Formation of the DHIC may be dependent upon the Insulin/IGF-1-like signaling (IIS) mediated pathway. Post-translationally, phosphorylated. Phosphorylation on Thr-182 may promote DHIC complex dissociation and consequently the activation of heat-shock transcription factor hsf-1. Phosphorylation is modulated by the Insulin/IGF-1-like signaling (IIS) mediated pathway. As to expression, expressed in pharynx, intestine, body wall muscles, vulva muscles, spermatheca, and several head and tail neurons.

Acts as a component of the WASH core complex that functions as a nucleation-promoting factor (NPF) at the surface of endosomes, where it recruits and activates the Arp2/3 complex to induce actin polymerization, playing a key role in the fission of tubules that serve as transport intermediates during endosome sorting. Acts as a component of the DHIC (ddl-1-containing hsf-1 inhibitory complex) which modulates lifespan by sequestering the heat-shock transcription factor hsf-1 to negatively regulate its binding to DNA and its transcriptional activity. This is WASH complex subunit homolog 3 (ddl-1) from Caenorhabditis elegans.